Consider the following 360-residue polypeptide: uncharacterized protein (360 aa).

3 Solcar repeats span residues 34–153 (VGVL…LSVW), 172–256 (PDWS…FKTN), and 266–355 (NPFV…FKFL). The next 6 membrane-spanning stretches (helical) occupy residues 40 to 60 (VSAS…LDVV), 125 to 145 (LWSG…FYFT), 178 to 198 (AVAG…IEMI), 225 to 247 (ISSF…GIYW), 269 to 289 (VVSF…THPF), and 327 to 348 (FSSG…MISF).

The protein belongs to the mitochondrial carrier (TC 2.A.29) family.

The protein resides in the mitochondrion inner membrane. This is an uncharacterized protein from Caenorhabditis elegans.